We begin with the raw amino-acid sequence, 456 residues long: Bifunctional protein GlmU (456 aa).

Positions 1–228 (MSARLAAIVL…PQEIFGINDR (228 aa)) are pyrophosphorylase. UDP-N-acetyl-alpha-D-glucosamine-binding positions include 10 to 13 (LAAG), K24, Q75, and 80 to 81 (GT). D105 contacts Mg(2+). G142, E157, N172, and N226 together coordinate UDP-N-acetyl-alpha-D-glucosamine. N226 provides a ligand contact to Mg(2+). The segment at 229–249 (LQLSQASRILNERTLVGLMLS) is linker. An N-acetyltransferase region spans residues 250–456 (GVTIVDPLRV…KAPYERTEDG (207 aa)). The UDP-N-acetyl-alpha-D-glucosamine site is built by R331 and K349. The active-site Proton acceptor is the H361. Y364 and N375 together coordinate UDP-N-acetyl-alpha-D-glucosamine. Residues A378, 384-385 (NY), A421, and R437 each bind acetyl-CoA.

This sequence in the N-terminal section; belongs to the N-acetylglucosamine-1-phosphate uridyltransferase family. It in the C-terminal section; belongs to the transferase hexapeptide repeat family. Homotrimer. The cofactor is Mg(2+).

The protein resides in the cytoplasm. It catalyses the reaction alpha-D-glucosamine 1-phosphate + acetyl-CoA = N-acetyl-alpha-D-glucosamine 1-phosphate + CoA + H(+). The catalysed reaction is N-acetyl-alpha-D-glucosamine 1-phosphate + UTP + H(+) = UDP-N-acetyl-alpha-D-glucosamine + diphosphate. The protein operates within nucleotide-sugar biosynthesis; UDP-N-acetyl-alpha-D-glucosamine biosynthesis; N-acetyl-alpha-D-glucosamine 1-phosphate from alpha-D-glucosamine 6-phosphate (route II): step 2/2. It functions in the pathway nucleotide-sugar biosynthesis; UDP-N-acetyl-alpha-D-glucosamine biosynthesis; UDP-N-acetyl-alpha-D-glucosamine from N-acetyl-alpha-D-glucosamine 1-phosphate: step 1/1. Its pathway is bacterial outer membrane biogenesis; LPS lipid A biosynthesis. In terms of biological role, catalyzes the last two sequential reactions in the de novo biosynthetic pathway for UDP-N-acetylglucosamine (UDP-GlcNAc). The C-terminal domain catalyzes the transfer of acetyl group from acetyl coenzyme A to glucosamine-1-phosphate (GlcN-1-P) to produce N-acetylglucosamine-1-phosphate (GlcNAc-1-P), which is converted into UDP-GlcNAc by the transfer of uridine 5-monophosphate (from uridine 5-triphosphate), a reaction catalyzed by the N-terminal domain. The protein is Bifunctional protein GlmU of Gloeobacter violaceus (strain ATCC 29082 / PCC 7421).